The sequence spans 323 residues: O-phosphoserine sulfhydrylase (323 aa).

The residue at position 51 (K51) is an N6-(pyridoxal phosphate)lysine. Pyridoxal 5'-phosphate contacts are provided by residues N81 and 184 to 188 (GTTGT). R220 serves as a coordination point for substrate. S265 contributes to the pyridoxal 5'-phosphate binding site.

This sequence belongs to the cysteine synthase/cystathionine beta-synthase family. In terms of assembly, homodimer. The cofactor is pyridoxal 5'-phosphate.

The catalysed reaction is [CysO sulfur-carrier protein]-C-terminal-Gly-aminoethanethioate + O-phospho-L-serine + H(+) = [CysO sulfur-carrier protein]-Gly-NH-CH2-C(O)-S-L-Cys + phosphate. It functions in the pathway amino-acid biosynthesis; L-cysteine biosynthesis. Catalyzes the formation of a covalent CysO-cysteine adduct via a sulfur transfer, using the thiocarboxylated sulfur carrier protein CysO-COSH as sulfur donor and O-phospho-L-serine (OPS) as sulfur acceptor. Can also use sodium sulfide as sulfur donor in vitro, albeit with less efficiency. The sequence is that of O-phosphoserine sulfhydrylase (cysM) from Mycobacterium bovis (strain ATCC BAA-935 / AF2122/97).